Reading from the N-terminus, the 74-residue chain is Translation initiation factor IF-1 (74 aa).

In terms of domain architecture, S1-like spans Met1–Lys73.

This sequence belongs to the IF-1 family. As to quaternary structure, component of the 30S ribosomal translation pre-initiation complex which assembles on the 30S ribosome in the order IF-2 and IF-3, IF-1 and N-formylmethionyl-tRNA(fMet); mRNA recruitment can occur at any time during PIC assembly.

The protein resides in the cytoplasm. One of the essential components for the initiation of protein synthesis. Stabilizes the binding of IF-2 and IF-3 on the 30S subunit to which N-formylmethionyl-tRNA(fMet) subsequently binds. Helps modulate mRNA selection, yielding the 30S pre-initiation complex (PIC). Upon addition of the 50S ribosomal subunit IF-1, IF-2 and IF-3 are released leaving the mature 70S translation initiation complex. The sequence is that of Translation initiation factor IF-1 from Thermosipho melanesiensis (strain DSM 12029 / CIP 104789 / BI429).